We begin with the raw amino-acid sequence, 308 residues long: Eukaryotic translation initiation factor 3 subunit G-A (308 aa).

Disordered regions lie at residues 1–35 (MPTG…KPDP) and 177–226 (TGDK…ADDN). Residues 185-194 (GAEPEPAQAP) show a composition bias toward low complexity. A compositionally biased stretch (basic and acidic residues) spans 209-226 (GGSRRGESMQPNRRADDN). The 79-residue stretch at 227–305 (ATIRVTNLSE…LILNVEWAKP (79 aa)) folds into the RRM domain.

Belongs to the eIF-3 subunit G family. As to quaternary structure, component of the eukaryotic translation initiation factor 3 (eIF-3) complex, which is composed of 13 subunits: eif3a, eif3b, eif3c, eif3d, eif3e, eif3f, eif3g, eif3h, eif3i, eif3j, eif3k, eif3l and eif3m.

The protein resides in the cytoplasm. Functionally, RNA-binding component of the eukaryotic translation initiation factor 3 (eIF-3) complex, which is involved in protein synthesis of a specialized repertoire of mRNAs and, together with other initiation factors, stimulates binding of mRNA and methionyl-tRNAi to the 40S ribosome. The eIF-3 complex specifically targets and initiates translation of a subset of mRNAs involved in cell proliferation. This subunit can bind 18S rRNA. In Xenopus laevis (African clawed frog), this protein is Eukaryotic translation initiation factor 3 subunit G-A (eif3g-a).